We begin with the raw amino-acid sequence, 434 residues long: 3-phosphoshikimate 1-carboxyvinyltransferase (434 aa).

3-phosphoshikimate-binding residues include K15, S16, and R20. Position 15 (K15) interacts with phosphoenolpyruvate. G96 and R124 together coordinate phosphoenolpyruvate. S169, Q171, S195, D319, and K346 together coordinate 3-phosphoshikimate. Q171 is a phosphoenolpyruvate binding site. D319 serves as the catalytic Proton acceptor. The phosphoenolpyruvate site is built by R350 and R394.

Belongs to the EPSP synthase family. In terms of assembly, monomer.

The protein resides in the cytoplasm. The enzyme catalyses 3-phosphoshikimate + phosphoenolpyruvate = 5-O-(1-carboxyvinyl)-3-phosphoshikimate + phosphate. The protein operates within metabolic intermediate biosynthesis; chorismate biosynthesis; chorismate from D-erythrose 4-phosphate and phosphoenolpyruvate: step 6/7. Its function is as follows. Catalyzes the transfer of the enolpyruvyl moiety of phosphoenolpyruvate (PEP) to the 5-hydroxyl of shikimate-3-phosphate (S3P) to produce enolpyruvyl shikimate-3-phosphate and inorganic phosphate. In Chlorobaculum tepidum (strain ATCC 49652 / DSM 12025 / NBRC 103806 / TLS) (Chlorobium tepidum), this protein is 3-phosphoshikimate 1-carboxyvinyltransferase.